The chain runs to 206 residues: RNA-free ribonuclease P (206 aa).

The segment at 187 to 206 (NLAGDDPGHAPPCGPDQPAG) is disordered. Positions 195–206 (HAPPCGPDQPAG) are enriched in pro residues.

This sequence belongs to the HARP family.

The catalysed reaction is Endonucleolytic cleavage of RNA, removing 5'-extranucleotides from tRNA precursor.. In terms of biological role, RNA-free RNase P that catalyzes the removal of the 5'-leader sequence from pre-tRNA to produce the mature 5'-terminus. The polypeptide is RNA-free ribonuclease P (Halorhodospira halophila (strain DSM 244 / SL1) (Ectothiorhodospira halophila (strain DSM 244 / SL1))).